We begin with the raw amino-acid sequence, 308 residues long: Glycosyltransferase 6 domain-containing protein 1 (308 aa).

The Cytoplasmic portion of the chain corresponds to 1–6 (MNSKRM). A helical; Signal-anchor for type II membrane protein transmembrane segment spans residues 7-23 (LLLVLFAFSLMLVERYF). Residues 24-308 (RNHQVEELRL…KVAHDSHRKL (285 aa)) are Lumenal-facing. An N-linked (GlcNAc...) asparagine glycan is attached at asparagine 74. Substrate-binding positions include 82–87 (FATGRF), 173–175 (AVN), and 195–198 (HAWW). Glutamate 263 acts as the Nucleophile in catalysis.

The protein belongs to the glycosyltransferase 6 family. It depends on Mn(2+) as a cofactor.

The protein localises to the membrane. This chain is Glycosyltransferase 6 domain-containing protein 1 (GLT6D1), found in Macaca fascicularis (Crab-eating macaque).